The primary structure comprises 114 residues: uncharacterized protein (114 aa).

2 disordered regions span residues 26–45 (GMKQKRKPASSEPTPEDALG) and 72–98 (PKGSEPPGRSAGLQGATERSGRPSVQA).

This is an uncharacterized protein from Homo sapiens (Human).